Reading from the N-terminus, the 221-residue chain is Dynein light chain Tctex-type 4 (221 aa).

Disordered regions lie at residues 1–52 (MASR…SRRG) and 65–87 (NSLVGPGAGPGGQRPSLGPVPPL). The segment covering 10-21 (RQEEENAKDSGR) has biased composition (basic and acidic residues). Phosphoserine is present on Ser-66.

It belongs to the dynein light chain Tctex-type family. Interacts with ENG/endoglin, TGFBR2 and TGFBR3. Interacts with PPP1CC. Ubiquitously expressed. Expressed in testis (at protein level).

It is found in the cell projection. It localises to the cilium. The protein resides in the flagellum. The protein localises to the cytoplasmic vesicle. Its subcellular location is the secretory vesicle. It is found in the acrosome. It localises to the cytoplasm. The protein resides in the cytoskeleton. The protein localises to the cilium axoneme. Its subcellular location is the nucleus. It is found in the microtubule organizing center. This Homo sapiens (Human) protein is Dynein light chain Tctex-type 4.